A 283-amino-acid chain; its full sequence is 4-diphosphocytidyl-2-C-methyl-D-erythritol kinase (283 aa).

Residue Lys10 is part of the active site. 99 to 109 (PMGGGLGGGSS) contributes to the ATP binding site. Residue Asp141 is part of the active site.

Belongs to the GHMP kinase family. IspE subfamily. Homodimer.

The enzyme catalyses 4-CDP-2-C-methyl-D-erythritol + ATP = 4-CDP-2-C-methyl-D-erythritol 2-phosphate + ADP + H(+). It functions in the pathway isoprenoid biosynthesis; isopentenyl diphosphate biosynthesis via DXP pathway; isopentenyl diphosphate from 1-deoxy-D-xylulose 5-phosphate: step 3/6. In terms of biological role, catalyzes the phosphorylation of the position 2 hydroxy group of 4-diphosphocytidyl-2C-methyl-D-erythritol. This chain is 4-diphosphocytidyl-2-C-methyl-D-erythritol kinase, found in Escherichia coli O157:H7 (strain EC4115 / EHEC).